Consider the following 689-residue polypeptide: Methionine--tRNA ligase (689 aa).

The 'HIGH' region signature appears at 19-29 (PYPTGDLHIGH). Zn(2+) contacts are provided by C150, C153, C162, and C166. The 'KMSKS' region signature appears at 338-342 (GLSTS). Position 341 (T341) interacts with ATP. The region spanning 591 to 689 (EFQALDLRVG…EDSEPGTKVM (99 aa)) is the tRNA-binding domain.

The protein belongs to the class-I aminoacyl-tRNA synthetase family. MetG type 1 subfamily. In terms of assembly, homodimer. The cofactor is Zn(2+).

It localises to the cytoplasm. It catalyses the reaction tRNA(Met) + L-methionine + ATP = L-methionyl-tRNA(Met) + AMP + diphosphate. Is required not only for elongation of protein synthesis but also for the initiation of all mRNA translation through initiator tRNA(fMet) aminoacylation. The polypeptide is Methionine--tRNA ligase (Halobacterium salinarum (strain ATCC 700922 / JCM 11081 / NRC-1) (Halobacterium halobium)).